Reading from the N-terminus, the 300-residue chain is 4-hydroxy-tetrahydrodipicolinate synthase (300 aa).

Residue T46 coordinates pyruvate. Y134 serves as the catalytic Proton donor/acceptor. K162 (schiff-base intermediate with substrate) is an active-site residue. V204 serves as a coordination point for pyruvate.

Belongs to the DapA family. As to quaternary structure, homotetramer; dimer of dimers.

The protein localises to the cytoplasm. It catalyses the reaction L-aspartate 4-semialdehyde + pyruvate = (2S,4S)-4-hydroxy-2,3,4,5-tetrahydrodipicolinate + H2O + H(+). It participates in amino-acid biosynthesis; L-lysine biosynthesis via DAP pathway; (S)-tetrahydrodipicolinate from L-aspartate: step 3/4. Functionally, catalyzes the condensation of (S)-aspartate-beta-semialdehyde [(S)-ASA] and pyruvate to 4-hydroxy-tetrahydrodipicolinate (HTPA). This is 4-hydroxy-tetrahydrodipicolinate synthase from Heliobacterium modesticaldum (strain ATCC 51547 / Ice1).